Reading from the N-terminus, the 205-residue chain is MIKVKICGITSPEDALTAVEAGADALGFVFYKESPRHIFPEEAARIINLLPPFVQAVGLFVNEAPEIVNQVSRNCRLGLVQLHGDETPDYCRKIEQRVMKAFRVRSLTCLDPIADYRMSGCLLDAYSPSFYGGTGKSFNWEIAREAMTRGHRIVLAGGLTPDNVAEAIRQVRPYAVDVSSGVESAPGRKDADKVREFIRNAKEAL.

It belongs to the TrpF family.

It carries out the reaction N-(5-phospho-beta-D-ribosyl)anthranilate = 1-(2-carboxyphenylamino)-1-deoxy-D-ribulose 5-phosphate. The protein operates within amino-acid biosynthesis; L-tryptophan biosynthesis; L-tryptophan from chorismate: step 3/5. This chain is N-(5'-phosphoribosyl)anthranilate isomerase, found in Trichlorobacter lovleyi (strain ATCC BAA-1151 / DSM 17278 / SZ) (Geobacter lovleyi).